The chain runs to 266 residues: Gap junction beta-4 protein (266 aa).

An intramembrane segment occupies 2–13 (NWAFLQGLLSGV). Over 14–20 (NKYSTVL) the chain is Cytoplasmic. The chain crosses the membrane as a helical span at residues 21–40 (SRIWLSVVFIFRVLVYVVAA). Topologically, residues 41 to 73 (EEVWDDEQKDFVCNTKQPGCPNVCYDEFFPVSH) are extracellular. 3 disulfides stabilise this stretch: cysteine 53–cysteine 175, cysteine 60–cysteine 169, and cysteine 64–cysteine 164. A helical membrane pass occupies residues 74–94 (VRLWALQLILVTCPSLLVVMH). The Cytoplasmic portion of the chain corresponds to 95-130 (VAYREERERKHHLKHGPNAPSLYDNLSKKRGGLWWT). The chain crosses the membrane as a helical span at residues 131–151 (YLLSLIFKAAVDAGFLYIFHR). Topologically, residues 152-184 (LYKDYDMPRVVACSVEPCPHTVDCYISRPTEKK) are extracellular. A helical membrane pass occupies residues 185–205 (VFTYFMVTTAAICILLNLSEV). The Cytoplasmic portion of the chain corresponds to 206–266 (FYLVGKRCME…SAPVDAGGYP (61 aa)).

Belongs to the connexin family. Beta-type (group I) subfamily. A hemichannel or connexon is composed of a hexamer of connexins. A functional gap junction is formed by the apposition of two hemichannels. Forms heteromeric channels with GJB2.

The protein resides in the cell membrane. It is found in the cell junction. It localises to the gap junction. Functionally, structural component of gap junctions. Gap junctions are dodecameric channels that connect the cytoplasm of adjoining cells. They are formed by the docking of two hexameric hemichannels, one from each cell membrane. Small molecules and ions diffuse from one cell to a neighboring cell via the central pore. This chain is Gap junction beta-4 protein (GJB4), found in Homo sapiens (Human).